Consider the following 27-residue polypeptide: Ganodermin (27 aa).

Its function is as follows. Has antifungal activity against B.cinera, F.oxysporum and P.piricola with IC(50) values of 15.2 uM, 12.4 uM and 18.1 uM, respectively. Lacks hemagglutinating activity towards rabbit erythrocytes. Lacks deoxyribonuclease, ribonuclease and protease inhibitory activities. This chain is Ganodermin, found in Ganoderma lucidum (Ling zhi medicinal fungus).